The chain runs to 230 residues: tRNA pseudouridine synthase B (230 aa).

Residue Asp-45 is the Nucleophile of the active site.

Belongs to the pseudouridine synthase TruB family. Type 1 subfamily.

It carries out the reaction uridine(55) in tRNA = pseudouridine(55) in tRNA. Its function is as follows. Responsible for synthesis of pseudouridine from uracil-55 in the psi GC loop of transfer RNAs. The sequence is that of tRNA pseudouridine synthase B from Endomicrobium trichonymphae.